We begin with the raw amino-acid sequence, 430 residues long: 3-phosphoshikimate 1-carboxyvinyltransferase (430 aa).

Residues Lys-33, Ser-34, and Arg-38 each contribute to the 3-phosphoshikimate site. Residue Lys-33 coordinates phosphoenolpyruvate. Residues Gly-101 and Arg-129 each contribute to the phosphoenolpyruvate site. 3-phosphoshikimate contacts are provided by Ser-172, Ser-173, Gln-174, Ser-201, Glu-319, and His-346. Gln-174 lines the phosphoenolpyruvate pocket. Glu-319 (proton acceptor) is an active-site residue. Residues Arg-350, Arg-391, and Lys-416 each contribute to the phosphoenolpyruvate site.

It belongs to the EPSP synthase family. Monomer.

The protein resides in the cytoplasm. The catalysed reaction is 3-phosphoshikimate + phosphoenolpyruvate = 5-O-(1-carboxyvinyl)-3-phosphoshikimate + phosphate. The protein operates within metabolic intermediate biosynthesis; chorismate biosynthesis; chorismate from D-erythrose 4-phosphate and phosphoenolpyruvate: step 6/7. Functionally, catalyzes the transfer of the enolpyruvyl moiety of phosphoenolpyruvate (PEP) to the 5-hydroxyl of shikimate-3-phosphate (S3P) to produce enolpyruvyl shikimate-3-phosphate and inorganic phosphate. The protein is 3-phosphoshikimate 1-carboxyvinyltransferase of Corynebacterium glutamicum (strain ATCC 13032 / DSM 20300 / JCM 1318 / BCRC 11384 / CCUG 27702 / LMG 3730 / NBRC 12168 / NCIMB 10025 / NRRL B-2784 / 534).